Here is a 236-residue protein sequence, read N- to C-terminus: Serine/arginine-rich SC35-like splicing factor SCL28 (236 aa).

2 disordered regions span residues 1 to 53 (MARA…LIRN) and 124 to 219 (EENR…RVLT). Residues 14–43 (RPRDRSPPRERKGYDDNRLRERPSSRDHES) are compositionally biased toward basic and acidic residues. The RRM domain occupies 47–125 (SGLLIRNLPL…REIAIVFAEE (79 aa)). Positions 149–176 (TSHRSPRRRYRSHSRSRSPPRRESRHSK) are enriched in basic residues. At Ser-184 the chain carries Phosphoserine. A compositionally biased stretch (basic and acidic residues) spans 199–217 (RNEREYKSRNCRSPREERV).

This sequence belongs to the splicing factor SR family. SCL subfamily. Component of the spliceosome. Interacts with RS2Z33, CYP59, CYP63 and CYP95.

The protein resides in the nucleus speckle. Functionally, involved in intron recognition and spliceosome assembly. Probably active at the 5' splice sites. This Arabidopsis thaliana (Mouse-ear cress) protein is Serine/arginine-rich SC35-like splicing factor SCL28 (SCL28).